Consider the following 1636-residue polypeptide: Tyrosine-protein phosphatase non-receptor type 23 (1636 aa).

One can recognise a BRO1 domain in the interval 8–394 (PMIWLDLKEA…AKIEDKNEVL (387 aa)). TPR repeat units follow at residues 250-283 (AVAHLHMGKQAEEQQKFGERVAYFQSALDKLNEA) and 374-407 (EEKAKLLREMMAKIEDKNEVLDQFMDSMQLDPET). Residues 550-623 (KAVLQNLKRI…VYLEQNLAAQ (74 aa)) are a coiled coil. The span at 701-714 (EAARQQLLDRELKK) shows a compositional bias: basic and acidic residues. 2 disordered regions span residues 701–812 (EAAR…GPHA) and 888–1151 (QAPI…AAEG). A Phosphoserine modification is found at serine 733. Residues 770 to 1130 (HFPPSPFPSS…SSSPESQHGG (361 aa)) form a his region. Composition is skewed to pro residues over residues 898-922 (RPNPTPAPPPPCFPVPPPQPLPTPY) and 950-962 (RIGPQPQPHPQPH). Arginine 950 carries the omega-N-methylarginine modification. Repeat copies occupy residues 953-954 (PQ), 955-956 (PQ), 957-958 (PH), 959-960 (PQ), 961-962 (PH), and 963-964 (PS). The segment at 953–964 (PQPQPHPQPHPS) is 6 X 2 AA approximate tandem repeats of P-Q. 3 stretches are compositionally biased toward pro residues: residues 983-1002 (LFPPQAPGLLPPQSPYPYAP), 1036-1050 (FPSPGPPQPPHPPLA), and 1083-1109 (HLVPSPAPSPGPGPVPPRPPAAEPPPC). The span at 1120–1131 (LSSSPESQHGGT) shows a compositional bias: polar residues. Phosphoserine is present on residues serine 1122 and serine 1123. Phosphothreonine is present on threonine 1131. One can recognise a Tyrosine-protein phosphatase domain in the interval 1192 to 1452 (DTVWRELQDA…RFCYEAVVRH (261 aa)). Cysteine 1392 acts as the Phosphocysteine intermediate in catalysis. The disordered stretch occupies residues 1513–1636 (LESPVASLPG…LDPLWTLNKT (124 aa)). Composition is skewed to pro residues over residues 1523 to 1533 (PAEPPGLPPAS) and 1542 to 1556 (SSSPPPLSSPLPEAP). Positions 1567-1587 (APSSGPPSSSLELLASLTPEA) are enriched in low complexity. Arginine 1615 carries the omega-N-methylarginine modification.

It belongs to the protein-tyrosine phosphatase family. Non-receptor class subfamily. As to quaternary structure, interacts with GRAP2 and GRB2. Interacts with UBAP1. Interacts with CHMP4B.

It localises to the nucleus. The protein resides in the cytoplasm. Its subcellular location is the cytoplasmic vesicle. It is found in the endosome. The protein localises to the cytoskeleton. It localises to the cilium basal body. The protein resides in the early endosome. The catalysed reaction is O-phospho-L-tyrosyl-[protein] + H2O = L-tyrosyl-[protein] + phosphate. Functionally, plays a role in sorting of endocytic ubiquitinated cargos into multivesicular bodies (MVBs) via its interaction with the ESCRT-I complex (endosomal sorting complex required for transport I), and possibly also other ESCRT complexes. May act as a negative regulator of Ras-mediated mitogenic activity. Plays a role in ciliogenesis. This Homo sapiens (Human) protein is Tyrosine-protein phosphatase non-receptor type 23 (PTPN23).